A 572-amino-acid polypeptide reads, in one-letter code: NADP-dependent malic enzyme (572 aa).

N-acetylmethionine is present on M1. Residue Y102 is the Proton donor of the active site. NADP(+) is bound at residue R155. K173 functions as the Proton acceptor in the catalytic mechanism. Residues E245, D246, and D269 each coordinate a divalent metal cation. NADP(+) contacts are provided by residues D269 and 301–318; that span reads GAGE…MAME. S336 is modified (phosphoserine).

This sequence belongs to the malic enzymes family. As to quaternary structure, homotetramer. Mg(2+) is required as a cofactor. The cofactor is Mn(2+).

The protein resides in the cytoplasm. The catalysed reaction is (S)-malate + NADP(+) = pyruvate + CO2 + NADPH. The enzyme catalyses oxaloacetate + H(+) = pyruvate + CO2. In terms of biological role, catalyzes the oxidative decarboxylation of (S)-malate in the presence of NADP(+) and divalent metal ions, and decarboxylation of oxaloacetate. The protein is NADP-dependent malic enzyme (Me1) of Mus musculus (Mouse).